Here is a 488-residue protein sequence, read N- to C-terminus: Pup--protein ligase (488 aa).

Residue glutamate 33 coordinates Mg(2+). Residue arginine 76 coordinates ATP. Tyrosine 78 is a binding site for Mg(2+). Catalysis depends on aspartate 80, which acts as the Proton acceptor. Glutamate 86 contributes to the Mg(2+) binding site. Positions 89 and 453 each coordinate ATP.

The protein belongs to the Pup ligase/Pup deamidase family. Pup-conjugating enzyme subfamily.

It carries out the reaction ATP + [prokaryotic ubiquitin-like protein]-L-glutamate + [protein]-L-lysine = ADP + phosphate + N(6)-([prokaryotic ubiquitin-like protein]-gamma-L-glutamyl)-[protein]-L-lysine.. The protein operates within protein degradation; proteasomal Pup-dependent pathway. Its pathway is protein modification; protein pupylation. Functionally, catalyzes the covalent attachment of the prokaryotic ubiquitin-like protein modifier Pup to the proteasomal substrate proteins, thereby targeting them for proteasomal degradation. This tagging system is termed pupylation. The ligation reaction involves the side-chain carboxylate of the C-terminal glutamate of Pup and the side-chain amino group of a substrate lysine. In Bifidobacterium adolescentis (strain ATCC 15703 / DSM 20083 / NCTC 11814 / E194a), this protein is Pup--protein ligase.